The following is a 99-amino-acid chain: MEEPTSSTNENKMKSPCESNKRKVDKKKKNLHRASAPEQSLKETEKAKYPTLVFYCRKNKKRNSNQLENNQPTESSTDPIKEKGDLDISAGSPQDGGQN.

Over residues 1-10 the composition is skewed to polar residues; the sequence is MEEPTSSTNE. The disordered stretch occupies residues 1-99; that stretch reads MEEPTSSTNE…AGSPQDGGQN (99 aa). Residues 11–22 are compositionally biased toward basic and acidic residues; sequence NKMKSPCESNKR. Residues 23–32 are compositionally biased toward basic residues; it reads KVDKKKKNLH. The span at 64 to 78 shows a compositional bias: polar residues; it reads SNQLENNQPTESSTD.

The protein belongs to the SPAN-X family.

This is Sperm protein associated with the nucleus on the X chromosome N4 (SPANXN4) from Homo sapiens (Human).